A 125-amino-acid chain; its full sequence is Diol dehydratase-reactivating factor small subunit (125 aa).

Glu-31 serves as a coordination point for Mg(2+).

The protein belongs to the DdrB/PduH family. Component of the DDR complex, a heterotetramer of DdrA(2)/DdrB(2). The DDR complex interacts with the diol dehydratase complex in the presence of ADP but not ATP. The cofactor is Mg(2+).

It carries out the reaction ATP + H2O = ADP + phosphate + H(+). Functionally, small subunit of the diol dehydratase-reactivating factor (DDR), which reactivates suicidally inhibited adenosylcobalamin-dependent diol dehydratase (DD, pddA, pddB, pddC). DDR acts as a chaperone, reactivates inactivated DD holoenzyme in the presence of ATP, Mg(2+) and free adenosylcobalamin (AdoCbl), by mediating the exchange of the tightly bound damaged cofactor AdoCbl for a free intact one. Reactivation takes place in two steps: ADP-dependent cobalamin release, and ATP-dependent dissociation of the DD apoenzyme-DDR complex. DDR has weak ATPase activity which is required for DD reactivation. Activates glycerol-inactivated, O2-inactivated holoenzyme and inactivated enzyme-cyanocobalamin complex. Also reactivates glycerol-inactivated hologlycerol dehydratase, a DD isozyme. The sequence is that of Diol dehydratase-reactivating factor small subunit from Klebsiella michiganensis (strain ATCC 8724 / DSM 4798 / JCM 20051 / NBRC 3318 / NRRL B-199 / KCTC 1686 / BUCSAV 143 / CCM 1901).